A 109-amino-acid chain; its full sequence is Large ribosomal subunit protein uL22 (109 aa).

The protein belongs to the universal ribosomal protein uL22 family. As to quaternary structure, part of the 50S ribosomal subunit.

This protein binds specifically to 23S rRNA; its binding is stimulated by other ribosomal proteins, e.g. L4, L17, and L20. It is important during the early stages of 50S assembly. It makes multiple contacts with different domains of the 23S rRNA in the assembled 50S subunit and ribosome. Functionally, the globular domain of the protein is located near the polypeptide exit tunnel on the outside of the subunit, while an extended beta-hairpin is found that lines the wall of the exit tunnel in the center of the 70S ribosome. The protein is Large ribosomal subunit protein uL22 of Polynucleobacter asymbioticus (strain DSM 18221 / CIP 109841 / QLW-P1DMWA-1) (Polynucleobacter necessarius subsp. asymbioticus).